The following is a 59-amino-acid chain: Large ribosomal subunit protein uL30 (59 aa).

The protein belongs to the universal ribosomal protein uL30 family. In terms of assembly, part of the 50S ribosomal subunit.

The chain is Large ribosomal subunit protein uL30 from Psychrobacter arcticus (strain DSM 17307 / VKM B-2377 / 273-4).